The following is a 162-amino-acid chain: Phosphopantetheine adenylyltransferase (162 aa).

Thr9 is a substrate binding site. Residues 9–10 (TF) and His17 contribute to the ATP site. The substrate site is built by Lys41, Leu77, and Arg91. ATP-binding positions include 92–94 (GLR), Glu102, and 127–133 (RQAIASK).

Belongs to the bacterial CoaD family. As to quaternary structure, homohexamer. Mg(2+) serves as cofactor.

It localises to the cytoplasm. The enzyme catalyses (R)-4'-phosphopantetheine + ATP + H(+) = 3'-dephospho-CoA + diphosphate. It functions in the pathway cofactor biosynthesis; coenzyme A biosynthesis; CoA from (R)-pantothenate: step 4/5. Functionally, reversibly transfers an adenylyl group from ATP to 4'-phosphopantetheine, yielding dephospho-CoA (dPCoA) and pyrophosphate. This chain is Phosphopantetheine adenylyltransferase, found in Cereibacter sphaeroides (strain ATCC 17029 / ATH 2.4.9) (Rhodobacter sphaeroides).